The sequence spans 543 residues: Hydroxylamine reductase (543 aa).

[4Fe-4S] cluster contacts are provided by Cys3, Cys6, Cys15, and Cys21. Residues His244, Glu268, Cys312, Cys399, Cys427, Cys452, Glu486, and Lys488 each contribute to the hybrid [4Fe-2O-2S] cluster site. At Cys399 the chain carries Cysteine persulfide.

The protein belongs to the HCP family. It depends on [4Fe-4S] cluster as a cofactor. The cofactor is hybrid [4Fe-2O-2S] cluster.

Its subcellular location is the cytoplasm. It catalyses the reaction A + NH4(+) + H2O = hydroxylamine + AH2 + H(+). Its function is as follows. Catalyzes the reduction of hydroxylamine to form NH(3) and H(2)O. This chain is Hydroxylamine reductase, found in Methanocella arvoryzae (strain DSM 22066 / NBRC 105507 / MRE50).